The chain runs to 202 residues: Small ribosomal subunit protein uS4 (202 aa).

A disordered region spans residues 22–43; that stretch reads TRKNARRAYPPGQHGQNRRKRS. Residues 90-152 enclose the S4 RNA-binding domain; the sequence is MRLDNTVFRL…DKSRKLVQAN (63 aa).

It belongs to the universal ribosomal protein uS4 family. As to quaternary structure, part of the 30S ribosomal subunit. Contacts protein S5. The interaction surface between S4 and S5 is involved in control of translational fidelity.

In terms of biological role, one of the primary rRNA binding proteins, it binds directly to 16S rRNA where it nucleates assembly of the body of the 30S subunit. Functionally, with S5 and S12 plays an important role in translational accuracy. The chain is Small ribosomal subunit protein uS4 from Gloeothece citriformis (strain PCC 7424) (Cyanothece sp. (strain PCC 7424)).